The following is a 381-amino-acid chain: Protein COS1 (381 aa).

Residues 1–42 (MKENELKNEKSVDVLSFKQLESQKIVLPQDLFRSSFTWFCYE) are Cytoplasmic-facing. The helical transmembrane segment at 43–63 (IYKSLAFRIWMLLWLPLSVWW) threads the bilayer. Topologically, residues 64–72 (KLSNNCIYP) are extracellular. Residues 73-93 (LIVSLLVLFLGPIFVLVICGL) form a helical membrane-spanning segment. The Cytoplasmic portion of the chain corresponds to 94–231 (SRKRSLSKQL…YRFKLTWFLK (138 aa)). The chain crosses the membrane as a helical span at residues 232 to 252 (RISNIFMLIPFLNFLCCIYVS). Topologically, residues 253–254 (RG) are extracellular. A helical transmembrane segment spans residues 255-275 (MCLLLRTFYLGWILFMLVQGF). Topologically, residues 276–381 (QNMRMIVLSV…QLSCSEESLA (106 aa)) are cytoplasmic.

This sequence belongs to the DUP/COS family.

The protein resides in the membrane. This Saccharomyces cerevisiae (strain ATCC 204508 / S288c) (Baker's yeast) protein is Protein COS1 (COS1).